The following is a 554-amino-acid chain: Propanediol dehydratase large subunit (554 aa).

It belongs to the diol/glycerol dehydratase large subunit family. The propanediol dehydratase enzyme is a heterotrimeric complex composed of a large (PduC), a medium (PduD) and a small (PduE) subunit. It depends on adenosylcob(III)alamin as a cofactor.

The protein localises to the bacterial microcompartment. The enzyme catalyses propane-1,2-diol = propanal + H2O. It participates in polyol metabolism; 1,2-propanediol degradation. Part of the PduCDE complex that catalyzes the dehydration of 1,2-propanediol (1,2-PD) to propionaldehyde. This subunit is directly targeted to the bacterial microcompartment (BMC). Functionally, expression of a cosmid containing the full 21-gene pdu operon in E.coli allows E.coli to grow on 1,2-propanediol (1,2-PD) with the appearance of BMCs in its cytoplasm. Its function is as follows. The 1,2-PD-specific bacterial microcompartment (BMC) concentrates low levels of 1,2-PD catabolic enzymes, concentrates volatile reaction intermediates thus enhancing pathway flux and keeps the level of toxic, mutagenic propionaldehyde low. The polypeptide is Propanediol dehydratase large subunit (Citrobacter freundii).